A 315-amino-acid polypeptide reads, in one-letter code: Acetyl-coenzyme A carboxylase carboxyl transferase subunit alpha (315 aa).

The 255-residue stretch at 38-292 folds into the CoA carboxyltransferase C-terminal domain; the sequence is RLQKKSNELT…KLRLKEDLAE (255 aa).

This sequence belongs to the AccA family. As to quaternary structure, acetyl-CoA carboxylase is a heterohexamer composed of biotin carboxyl carrier protein (AccB), biotin carboxylase (AccC) and two subunits each of ACCase subunit alpha (AccA) and ACCase subunit beta (AccD).

The protein resides in the cytoplasm. The catalysed reaction is N(6)-carboxybiotinyl-L-lysyl-[protein] + acetyl-CoA = N(6)-biotinyl-L-lysyl-[protein] + malonyl-CoA. It participates in lipid metabolism; malonyl-CoA biosynthesis; malonyl-CoA from acetyl-CoA: step 1/1. Component of the acetyl coenzyme A carboxylase (ACC) complex. First, biotin carboxylase catalyzes the carboxylation of biotin on its carrier protein (BCCP) and then the CO(2) group is transferred by the carboxyltransferase to acetyl-CoA to form malonyl-CoA. The chain is Acetyl-coenzyme A carboxylase carboxyl transferase subunit alpha from Haemophilus influenzae (strain PittEE).